The sequence spans 272 residues: UPF0759 protein YecE (272 aa).

The protein belongs to the UPF0759 family.

The chain is UPF0759 protein YecE (yecE) from Escherichia coli (strain K12).